Reading from the N-terminus, the 371-residue chain is tRNA-specific 2-thiouridylase MnmA (371 aa).

Residues 13–20 (GMSGGVDS) and methionine 39 each bind ATP. The segment at 99-101 (NPD) is interaction with target base in tRNA. Cysteine 104 acts as the Nucleophile in catalysis. A disulfide bridge connects residues cysteine 104 and cysteine 200. Glycine 128 provides a ligand contact to ATP. Positions 150-152 (KDQ) are interaction with tRNA. Cysteine 200 acts as the Cysteine persulfide intermediate in catalysis. The segment at 308–309 (RY) is interaction with tRNA.

It belongs to the MnmA/TRMU family.

It is found in the cytoplasm. It carries out the reaction S-sulfanyl-L-cysteinyl-[protein] + uridine(34) in tRNA + AH2 + ATP = 2-thiouridine(34) in tRNA + L-cysteinyl-[protein] + A + AMP + diphosphate + H(+). Its function is as follows. Catalyzes the 2-thiolation of uridine at the wobble position (U34) of tRNA, leading to the formation of s(2)U34. This is tRNA-specific 2-thiouridylase MnmA from Geobacillus thermodenitrificans (strain NG80-2).